The chain runs to 82 residues: Toxin NaTx-13 (82 aa).

An LCN-type CS-alpha/beta domain is found at 6-70; the sequence is PGGYPVNQFK…KNSIEVFSCG (65 aa). 4 disulfides stabilise this stretch: Cys16-Cys69, Cys20-Cys44, Cys30-Cys49, and Cys34-Cys51.

Belongs to the long (4 C-C) scorpion toxin superfamily. Sodium channel inhibitor family. In terms of tissue distribution, expressed by the venom gland.

The protein resides in the secreted. In terms of biological role, probable sodium channel inhibitor. In Centruroides sculpturatus (Arizona bark scorpion), this protein is Toxin NaTx-13.